A 379-amino-acid chain; its full sequence is Homoserine O-succinyltransferase (379 aa).

One can recognise an AB hydrolase-1 domain in the interval Asn-51–Leu-360. Catalysis depends on Ser-157, which acts as the Nucleophile. Arg-227 contributes to the substrate binding site. Active-site residues include Asp-323 and His-356. Asp-357 lines the substrate pocket.

The protein belongs to the AB hydrolase superfamily. MetX family. Homodimer.

The protein localises to the cytoplasm. It carries out the reaction L-homoserine + succinyl-CoA = O-succinyl-L-homoserine + CoA. Its pathway is amino-acid biosynthesis; L-methionine biosynthesis via de novo pathway; O-succinyl-L-homoserine from L-homoserine: step 1/1. Its function is as follows. Transfers a succinyl group from succinyl-CoA to L-homoserine, forming succinyl-L-homoserine. In Pseudomonas fluorescens (strain SBW25), this protein is Homoserine O-succinyltransferase.